A 1977-amino-acid polypeptide reads, in one-letter code: Echinoderm microtubule-associated protein-like 5 (1977 aa).

WD repeat units follow at residues 59-100 (GHSD…TVSV), 104-145 (VHTH…MLSM), 148-187 (GHTDRIFDISWDLYQPNKLVSCGVKHIKFWSLCGNALTPK), 195-233 (GDLQTILCLACARDELTYSGALNGDIYVWKGINLIRTIQ), 235-273 (AHTAGIFSMNSCEEGFATGGRDGCIRLWDLTFKPITVID), 280-321 (GYKG…LIMQ), 323-362 (HCEGELWALAVHPTKPLAVTGSDDRSVRIWSLVDHALIAR), 406-445 (DRKEAIHELKYSPDGAYLAVGCNDSSVDIYGVAQRYKKVG), 449-488 (GSLSFITHLDWSSDSRYLQTNDGSGKRLLYKMPGGKEVTS), and 561-601 (GHSA…KLKD). The tract at residues 609–629 (ESLAESNSDESDSDLSDVPEL) is disordered. Residues 615-629 (NSDESDSDLSDVPEL) are compositionally biased toward acidic residues. WD repeat units follow at residues 725–766 (GHDD…PLSI), 770–811 (YHQY…KLSV), 814–853 (GSKDKIFVVKMNPYVPDKLITAGIKHMKFWRRAGGGLIGK), 861–900 (GKNDTMMCAVYGWTEEMAFSGTSTGDVCIWRDVFLVKTVK), 901–940 (AHDGPVFSMHALEKGFVTGGKDGMVALWDDSFERCLKTYA), 996–1035 (HMEGEVWGLATHPYLPICATVSDDKTLRIWDLSPSHCMLA), 1038–1077 (KLKKGGRCCCFSPDGKALAVGLNDGSFLMANADTLEDLVS), 1080–1120 (HRKD…RVGV), and 1236–1276 (AHST…HREK). Disordered stretches follow at residues 1276 to 1297 (KKYCDSEESDIDSEEDGGYDSD) and 1323 to 1363 (PHLQ…NVGK). The span at 1281 to 1294 (SEESDIDSEEDGGY) shows a compositional bias: acidic residues. Basic and acidic residues predominate over residues 1326–1337 (QQKEPSVDERQG). WD repeat units lie at residues 1420–1471 (EHND…TLSI), 1475–1516 (SHSK…KIAS), 1519–1558 (GHNQRIFVAEFRPDSDTQFVSVGIKHVKFWTLAGRALLSK), 1568–1606 (ARMQTMLAVAFGANNLTFTGTISGDVCVWKDHILCRVVA), 1608–1654 (AHNG…RAFR), 1699–1739 (GHVD…MLNK), 1741–1782 (NLGH…GKKR), 1783–1822 (DRRCAIHDIRFSPDSRYLAVGSSENSVDFYDLTLGPTLNR), 1895–1934 (AEKADVTCACVSHSGISLVTGDDFGMVKLYDFPCPEKFAK), and 1940–1977 (GHSPHVTNIRFTSGDRHVVSAGGDDCSLFVWKCVHMPH).

This sequence belongs to the WD repeat EMAP family.

The protein localises to the cytoplasm. Its subcellular location is the cytoskeleton. In terms of biological role, may modify the assembly dynamics of microtubules, such that microtubules are slightly longer, but more dynamic. This chain is Echinoderm microtubule-associated protein-like 5 (Eml5), found in Mus musculus (Mouse).